The chain runs to 234 residues: 2-C-methyl-D-erythritol 4-phosphate cytidylyltransferase (234 aa).

The protein belongs to the IspD/TarI cytidylyltransferase family. IspD subfamily.

It catalyses the reaction 2-C-methyl-D-erythritol 4-phosphate + CTP + H(+) = 4-CDP-2-C-methyl-D-erythritol + diphosphate. It functions in the pathway isoprenoid biosynthesis; isopentenyl diphosphate biosynthesis via DXP pathway; isopentenyl diphosphate from 1-deoxy-D-xylulose 5-phosphate: step 2/6. Catalyzes the formation of 4-diphosphocytidyl-2-C-methyl-D-erythritol from CTP and 2-C-methyl-D-erythritol 4-phosphate (MEP). This is 2-C-methyl-D-erythritol 4-phosphate cytidylyltransferase from Thermosynechococcus vestitus (strain NIES-2133 / IAM M-273 / BP-1).